The chain runs to 319 residues: tRNA-cytidine(32) 2-sulfurtransferase (319 aa).

Positions 49–54 (SGGKDS) match the PP-loop motif motif. Positions 124, 127, and 215 each coordinate [4Fe-4S] cluster.

Belongs to the TtcA family. In terms of assembly, homodimer. Requires Mg(2+) as cofactor. [4Fe-4S] cluster serves as cofactor.

Its subcellular location is the cytoplasm. It carries out the reaction cytidine(32) in tRNA + S-sulfanyl-L-cysteinyl-[cysteine desulfurase] + AH2 + ATP = 2-thiocytidine(32) in tRNA + L-cysteinyl-[cysteine desulfurase] + A + AMP + diphosphate + H(+). It functions in the pathway tRNA modification. Its function is as follows. Catalyzes the ATP-dependent 2-thiolation of cytidine in position 32 of tRNA, to form 2-thiocytidine (s(2)C32). The sulfur atoms are provided by the cysteine/cysteine desulfurase (IscS) system. The polypeptide is tRNA-cytidine(32) 2-sulfurtransferase (Shewanella amazonensis (strain ATCC BAA-1098 / SB2B)).